Consider the following 88-residue polypeptide: uncharacterized protein (88 aa).

This is an uncharacterized protein from Sulfolobus islandicus filamentous virus (isolate Iceland/Hveragerdi) (SIFV).